We begin with the raw amino-acid sequence, 1835 residues long: Protein TIC 214 (1835 aa).

Transmembrane regions (helical) follow at residues 25-45 (VGLYYGFLTTFSIGPSYLFLL), 64-84 (FITGQLMMFISIYYAPLHLAL), 87-107 (PHTITVLVLPYLLFHFFWNNH), 124-144 (LSIQCVFLNNLIFQLFNHFIL), 172-192 (VGWLIGHIFFMKWVGLVLFWI), and 221-241 (IFSILLFITCVYYLGRIPSPI). Residues 246–258 (LKETSETEERGES) show a composition bias toward basic and acidic residues. Disordered regions lie at residues 246 to 304 (LKET…DGNQ), 735 to 759 (EFKTSDSEEKEAKEKEKTKEEKKEE), and 1535 to 1578 (NRNQ…KRQS). Residues 259–268 (AEETDVEIET) are compositionally biased toward acidic residues. Residues 1553 to 1569 (PRNRQKDLEKDYAESDI) are compositionally biased toward basic and acidic residues.

The protein belongs to the TIC214 family. As to quaternary structure, part of the Tic complex.

It is found in the plastid. It localises to the chloroplast inner membrane. Functionally, involved in protein precursor import into chloroplasts. May be part of an intermediate translocation complex acting as a protein-conducting channel at the inner envelope. The protein is Protein TIC 214 of Liriodendron tulipifera (Tuliptree).